A 331-amino-acid polypeptide reads, in one-letter code: Biotin synthase (331 aa).

A Radical SAM core domain is found at Gln51–Arg278. [4Fe-4S] cluster is bound by residues Cys66, Cys70, and Cys73. [2Fe-2S] cluster is bound by residues Cys110, Cys141, Cys201, and Arg273.

This sequence belongs to the radical SAM superfamily. Biotin synthase family. In terms of assembly, homodimer. It depends on [4Fe-4S] cluster as a cofactor. The cofactor is [2Fe-2S] cluster.

It carries out the reaction (4R,5S)-dethiobiotin + (sulfur carrier)-SH + 2 reduced [2Fe-2S]-[ferredoxin] + 2 S-adenosyl-L-methionine = (sulfur carrier)-H + biotin + 2 5'-deoxyadenosine + 2 L-methionine + 2 oxidized [2Fe-2S]-[ferredoxin]. It participates in cofactor biosynthesis; biotin biosynthesis; biotin from 7,8-diaminononanoate: step 2/2. Its function is as follows. Catalyzes the conversion of dethiobiotin (DTB) to biotin by the insertion of a sulfur atom into dethiobiotin via a radical-based mechanism. The chain is Biotin synthase from Histophilus somni (strain 129Pt) (Haemophilus somnus).